The chain runs to 88 residues: Cell division topological specificity factor (88 aa).

Belongs to the MinE family.

Its function is as follows. Prevents the cell division inhibition by proteins MinC and MinD at internal division sites while permitting inhibition at polar sites. This ensures cell division at the proper site by restricting the formation of a division septum at the midpoint of the long axis of the cell. The polypeptide is Cell division topological specificity factor (Pseudoalteromonas translucida (strain TAC 125)).